A 474-amino-acid chain; its full sequence is Aspartic-type endopeptidase ctsD (474 aa).

The first 19 residues, 1–19 (MHLLQCLLSTISLASTVTA), serve as a signal peptide directing secretion. The region spanning 106–413 (YFATVRVGSQ…DYDNHRIGFA (308 aa)) is the Peptidase A1 domain. Residue D124 is part of the active site. N-linked (GlcNAc...) asparagine glycans are attached at residues N189, N197, N275, and N301. D307 is an active-site residue. N338, N344, and N414 each carry an N-linked (GlcNAc...) asparagine glycan. Residue S452 is the site of GPI-anchor amidated serine attachment. Residues 453–474 (ASIVSRFVHWPFIFALLCMVLV) constitute a propeptide, removed in mature form.

This sequence belongs to the peptidase A1 family.

The protein localises to the cell membrane. In terms of biological role, secreted aspartic-type endopeptidase which is secreted and contributes to virulence. The protein is Aspartic-type endopeptidase ctsD (ctsD) of Aspergillus fumigatus (strain ATCC MYA-4609 / CBS 101355 / FGSC A1100 / Af293) (Neosartorya fumigata).